A 749-amino-acid chain; its full sequence is Chitin synthase G (749 aa).

Helical transmembrane passes span 40–60, 73–93, 421–441, 451–471, and 483–503; these read CVGE…PLPP, VLQW…WLFC, FMQN…ISII, PVGF…YFGI, and LMFI…IFTA. The segment at 683 to 749 is disordered; the sequence is IESGSGIPSG…RRYMQPEQMV (67 aa). The span at 697 to 718 shows a compositional bias: polar residues; sequence LSSSVPQSGMQQSRAVPGNMSQ. Residue Asn715 is glycosylated (N-linked (GlcNAc...) asparagine). Positions 728 to 742 are enriched in basic residues; it reads YTKRPSRIPRQKRRY.

It belongs to the chitin synthase family. Class VI subfamily.

The protein resides in the cell membrane. The enzyme catalyses [(1-&gt;4)-N-acetyl-beta-D-glucosaminyl](n) + UDP-N-acetyl-alpha-D-glucosamine = [(1-&gt;4)-N-acetyl-beta-D-glucosaminyl](n+1) + UDP + H(+). Its function is as follows. Polymerizes chitin, a structural polymer of the cell wall and septum, by transferring the sugar moiety of UDP-GlcNAc to the non-reducing end of the growing chitin polymer. Plays an important role in septal growth or maintenance. Mediates colony spore formation. The sequence is that of Chitin synthase G from Aspergillus niger (strain ATCC MYA-4892 / CBS 513.88 / FGSC A1513).